The sequence spans 217 residues: Ras-related protein Rab-39A (217 aa).

GTP contacts are provided by S17, G20, K21, S22, C23, and T44. S22 lines the Mg(2+) pocket. The segment at 39-47 (PACDPTVGV) is switch-I. Mg(2+) contacts are provided by T44 and D68. Residues G71, H127, K128, D130, A158, and K159 each coordinate GTP. Residues 71–87 (GQERFRSITRSYYRNSV) are switch-II. 2 S-geranylgeranyl cysteine lipidation sites follow: C215 and C217. At C217 the chain carries Cysteine methyl ester.

The protein belongs to the small GTPase superfamily. Rab family. As to quaternary structure, interacts (GDP-bound) with C9orf72; C9orf72 acts as a GEF for RAB39A. Interacts (GTP-bound) with HOPS complex components VPS39 and VPS41, and STX17; interaction between HOPS components and RAB39A contributes to obtaining a functional HOPS complex that promotes membrane fusion driven by STX17-SNAP29-VAMP8. Interacts with BECN1. Probably associates with the PI3K (PI3KC3/PI3K-III/class III phosphatidylinositol 3-kinase) complex. Interacts with UACA. Interacts with isoform a of RASSF1. Does not interact with isoform c of RASSF1. Mg(2+) serves as cofactor. In terms of processing, prenylated. Prenylation is required for association with cellular membranes.

The protein localises to the cell membrane. It is found in the cytoplasmic vesicle. Its subcellular location is the phagosome membrane. The protein resides in the late endosome membrane. It localises to the lysosome membrane. The protein localises to the autolysosome membrane. It catalyses the reaction GTP + H2O = GDP + phosphate + H(+). With respect to regulation, regulated by guanine nucleotide exchange factors (GEFs) including c9Orf72, which promote the exchange of bound GDP for free GTP. Regulated by GTPase activating proteins (GAPs) which increase the GTP hydrolysis activity. Inhibited by GDP dissociation inhibitors (GDIs). In terms of biological role, the small GTPases Rab are key regulators of intracellular membrane trafficking, from the formation of transport vesicles to their fusion with membranes. Rabs cycle between an inactive GDP-bound form and an active GTP-bound form that is able to recruit to membranes different sets of downstream effectors directly responsible for vesicle formation, movement, tethering and fusion. RAB39A regulates autophagosome-lysosome fusion via recruitment of the HOPS endosomal tethering complex onto lysosomes; this process involves lysosomal RAB39A and autophagosomal RAB2A recruitment of HOPS subcomplexes VPS41-VPS16-VPS18-VPS33A and VPS39-VPS11, respectively, which assemble into a functional complex to mediate membrane tethering and SNAREs-driven membrane fusion. Also negatively regulates lipopolysaccharide (LPS)-induced autophagosome formation in macrophages, possibly by implicating PI3K. Promotes the delivery of MHC-I molecules from the ER to phagosomes and the generation of peptide-loaded MHC-I complexes in phagosomes, thus enhancing antigen cross-presentation by dendritic cells. Plays a role in the maturation and acidification of phagosomes that engulf pathogens, such as S.aureus and M.tuberculosis. Plays a role in the fusion of phagosomes with lysosomes. May be involved in multiple neurite formation. In Mus musculus (Mouse), this protein is Ras-related protein Rab-39A.